We begin with the raw amino-acid sequence, 205 residues long: Large ribosomal subunit protein uL3 (205 aa).

The segment at 126–150 (GGPKTHGQSDRHRAPGSISSTTTPG) is disordered.

This sequence belongs to the universal ribosomal protein uL3 family. As to quaternary structure, part of the 50S ribosomal subunit. Forms a cluster with proteins L14 and L19.

Its function is as follows. One of the primary rRNA binding proteins, it binds directly near the 3'-end of the 23S rRNA, where it nucleates assembly of the 50S subunit. The protein is Large ribosomal subunit protein uL3 of Dehalococcoides mccartyi (strain ATCC BAA-2266 / KCTC 15142 / 195) (Dehalococcoides ethenogenes (strain 195)).